We begin with the raw amino-acid sequence, 328 residues long: dTDP-glucose 4,6-dehydratase (328 aa).

NAD(+)-binding positions include 13-14 (FI), 37-40 (DALT), 63-64 (DI), 82-86 (LAAES), and Thr101. Ser86 contributes to the substrate binding site. Residue Thr126 participates in substrate binding. The Proton donor role is filled by Asp127. Catalysis depends on proton acceptor residues Glu128 and Tyr150. 150–154 (YSASK) lines the NAD(+) pocket. Substrate is bound at residue Asn179. Asn180 serves as a coordination point for NAD(+). Substrate contacts are provided by residues 189–190 (KL), 205–207 (PLY), Arg214, Asn249, and 272–276 (DRKGH).

Belongs to the NAD(P)-dependent epimerase/dehydratase family. dTDP-glucose dehydratase subfamily. In terms of assembly, homodimer. The cofactor is NAD(+).

It carries out the reaction dTDP-alpha-D-glucose = dTDP-4-dehydro-6-deoxy-alpha-D-glucose + H2O. It functions in the pathway antibiotic biosynthesis; streptomycin biosynthesis. Functionally, involved in the biosynthesis of the streptose moiety of streptomycin. Catalyzes the dehydration of dTDP-D-glucose to form dTDP-6-deoxy-D-xylo-4-hexulose via a three-step process involving oxidation, dehydration and reduction. This chain is dTDP-glucose 4,6-dehydratase, found in Streptomyces griseus.